Reading from the N-terminus, the 449-residue chain is UDP-N-acetylmuramate--L-alanine ligase (449 aa).

Residue 110–116 (GTHGKTT) participates in ATP binding.

Belongs to the MurCDEF family.

The protein resides in the cytoplasm. The enzyme catalyses UDP-N-acetyl-alpha-D-muramate + L-alanine + ATP = UDP-N-acetyl-alpha-D-muramoyl-L-alanine + ADP + phosphate + H(+). It participates in cell wall biogenesis; peptidoglycan biosynthesis. In terms of biological role, cell wall formation. The protein is UDP-N-acetylmuramate--L-alanine ligase of Desulfitobacterium hafniense (strain Y51).